The sequence spans 134 residues: Transcription antitermination protein NusB (134 aa).

This sequence belongs to the NusB family.

Its function is as follows. Involved in transcription antitermination. Required for transcription of ribosomal RNA (rRNA) genes. Binds specifically to the boxA antiterminator sequence of the ribosomal RNA (rrn) operons. The sequence is that of Transcription antitermination protein NusB from Shewanella loihica (strain ATCC BAA-1088 / PV-4).